The chain runs to 993 residues: General transcription factor II-I repeat domain-containing protein 1 (993 aa).

2 GTF2I-like repeats span residues 117–211 (LGPT…EPKS) and 332–426 (LRET…DGTT). Residues 461–480 (GSRSEKSSISDECEPGTSSE) form a disordered region. 3 GTF2I-like repeats span residues 597-691 (DGIG…LEDC), 727-821 (LSRI…RPDD), and 824-918 (ANRL…ICSE). The interval 916 to 961 (CSEPPKIKNGNTGPKRKRKRVSEGNSISSASSNCSSSSSSSSNMDP) is disordered. Residues 929–936 (PKRKRKRV) carry the Nuclear localization signal motif. The segment covering 938 to 961 (EGNSISSASSNCSSSSSSSSNMDP) has biased composition (low complexity).

This sequence belongs to the TFII-I family. Interacts (via repeats 4-5) with foxh1/fast1 (via Fork-head domain). Interacts with smad2 and smad3 (via MH1 domain) in a ligand (activin)-dependent manner. Interacts with pou5f1.1/oct-25 to form a repression complex on the promoters of the gsc and mix2 genes. Uniformly expressed in the embryo in pre- and early gastrula stages. Enriched in the head region of early neurula through tailbud stages.

The protein resides in the nucleus. Functionally, transcription factor that activates a subset of organizer-specific genes. Binds to the distal element (DE) of the gsc promoter to regulate its expression. In the presence of pou5f1.1/oct-25, forms a repression complex on the promoter of the gsc and mix2 genes to inhibit their transcription. The chain is General transcription factor II-I repeat domain-containing protein 1 (gtf2ird1) from Xenopus laevis (African clawed frog).